A 163-amino-acid chain; its full sequence is Phosphopantetheine adenylyltransferase (163 aa).

Residue Ser9 participates in substrate binding. ATP is bound by residues 9–10 (SF) and His17. Residues Lys41, Leu73, and Lys87 each contribute to the substrate site. ATP-binding positions include 88–90 (GLR), Glu98, and 124–130 (YTYVSST).

This sequence belongs to the bacterial CoaD family. As to quaternary structure, homohexamer. Mg(2+) is required as a cofactor.

Its subcellular location is the cytoplasm. The catalysed reaction is (R)-4'-phosphopantetheine + ATP + H(+) = 3'-dephospho-CoA + diphosphate. It functions in the pathway cofactor biosynthesis; coenzyme A biosynthesis; CoA from (R)-pantothenate: step 4/5. Functionally, reversibly transfers an adenylyl group from ATP to 4'-phosphopantetheine, yielding dephospho-CoA (dPCoA) and pyrophosphate. This is Phosphopantetheine adenylyltransferase from Fusobacterium nucleatum subsp. nucleatum (strain ATCC 25586 / DSM 15643 / BCRC 10681 / CIP 101130 / JCM 8532 / KCTC 2640 / LMG 13131 / VPI 4355).